Consider the following 498-residue polypeptide: ATP synthase subunit beta, chloroplastic (498 aa).

An ATP-binding site is contributed by 172-179 (GGAGVGKT).

The protein belongs to the ATPase alpha/beta chains family. In terms of assembly, F-type ATPases have 2 components, CF(1) - the catalytic core - and CF(0) - the membrane proton channel. CF(1) has five subunits: alpha(3), beta(3), gamma(1), delta(1), epsilon(1). CF(0) has four main subunits: a(1), b(1), b'(1) and c(9-12).

It is found in the plastid. The protein resides in the chloroplast thylakoid membrane. It catalyses the reaction ATP + H2O + 4 H(+)(in) = ADP + phosphate + 5 H(+)(out). Produces ATP from ADP in the presence of a proton gradient across the membrane. The catalytic sites are hosted primarily by the beta subunits. The protein is ATP synthase subunit beta, chloroplastic of Sorghum bicolor (Sorghum).